A 172-amino-acid chain; its full sequence is Crossover junction endodeoxyribonuclease RuvC (172 aa).

Active-site residues include Asp12, Glu71, and Asp143. 3 residues coordinate Mg(2+): Asp12, Glu71, and Asp143.

The protein belongs to the RuvC family. In terms of assembly, homodimer which binds Holliday junction (HJ) DNA. The HJ becomes 2-fold symmetrical on binding to RuvC with unstacked arms; it has a different conformation from HJ DNA in complex with RuvA. In the full resolvosome a probable DNA-RuvA(4)-RuvB(12)-RuvC(2) complex forms which resolves the HJ. Requires Mg(2+) as cofactor.

The protein localises to the cytoplasm. The enzyme catalyses Endonucleolytic cleavage at a junction such as a reciprocal single-stranded crossover between two homologous DNA duplexes (Holliday junction).. The RuvA-RuvB-RuvC complex processes Holliday junction (HJ) DNA during genetic recombination and DNA repair. Endonuclease that resolves HJ intermediates. Cleaves cruciform DNA by making single-stranded nicks across the HJ at symmetrical positions within the homologous arms, yielding a 5'-phosphate and a 3'-hydroxyl group; requires a central core of homology in the junction. The consensus cleavage sequence is 5'-(A/T)TT(C/G)-3'. Cleavage occurs on the 3'-side of the TT dinucleotide at the point of strand exchange. HJ branch migration catalyzed by RuvA-RuvB allows RuvC to scan DNA until it finds its consensus sequence, where it cleaves and resolves the cruciform DNA. The protein is Crossover junction endodeoxyribonuclease RuvC of Coxiella burnetii (strain CbuK_Q154) (Coxiella burnetii (strain Q154)).